The sequence spans 117 residues: MSQRDTGAHYENLARRHLERAGLVFQAANVAFRGGEIDLIMRDGDAWVFVEVRFRRNDLFGGAAASITPRKQQRLHLAAAVWLAQRGASFATTSCRFDVVAITGNQLEWLPNAFNTD.

Belongs to the UPF0102 family.

In Yersinia pestis bv. Antiqua (strain Nepal516), this protein is UPF0102 protein YPN_3432.